Reading from the N-terminus, the 515-residue chain is 3,4-dehydroadipyl-CoA semialdehyde dehydrogenase (515 aa).

Residues Glu-255 and Cys-294 contribute to the active site. Residues 470–515 (VMPTCLHGGPRARRRRRGVGRSARAGDVSPPLRRAGRPRGAGSPVA) are disordered. A compositionally biased stretch (basic residues) spans 479-488 (PRARRRRRGV). Residues 489 to 515 (GRSARAGDVSPPLRRAGRPRGAGSPVA) show a composition bias toward low complexity.

Belongs to the aldehyde dehydrogenase family. As to quaternary structure, homodimer.

The enzyme catalyses (3Z)-6-oxohex-3-enoyl-CoA + NADP(+) + H2O = cis-3,4-dehydroadipyl-CoA + NADPH + 2 H(+). Catalyzes the NADP-dependent oxidation of 3,4-dehydroadipyl-CoA semialdehyde to form cis-3,4-dehydroadipyl-CoA. In Aromatoleum evansii (Azoarcus evansii), this protein is 3,4-dehydroadipyl-CoA semialdehyde dehydrogenase (boxD).